We begin with the raw amino-acid sequence, 110 residues long: UPF0060 membrane protein BTH_I2792 (110 aa).

4 helical membrane-spanning segments follow: residues 9 to 29, 34 to 54, 64 to 84, and 86 to 106; these read ALFV…WLVL, PVWL…LLTL, AAYG…VDGV, and LSRW…VIAL.

It belongs to the UPF0060 family.

Its subcellular location is the cell inner membrane. This is UPF0060 membrane protein BTH_I2792 from Burkholderia thailandensis (strain ATCC 700388 / DSM 13276 / CCUG 48851 / CIP 106301 / E264).